The chain runs to 1899 residues: MLQQFCLWKWLAVGIAVATILASSLAQNDEDCKLARTGPPATIVPIDEESRNGTILVDNMLIKGTAAGPDPTIELSLKDNVDYWVILDPISQRLYLNSTGRVLDRDPPMSIQSIVVQVQCVNKKVGTIINHEVRIVVRDRNDNSPQFQQQRYYVAVNELTPVGTTIFTGFSGNNGATDIDDGPNGQIEYVIQYNPNDKTSNRTFDIPLTLSGAVVLRERLNYEEKTRYFVIVQANDRAQNLHERRTSTTTLTVDVLDGDDLGPMFLPCVLVNNTRDCRPLTYQASLPELTDPVHVNPISVTPPIQAIDQDRNIQPPSDRPGILYSILVGTPEDYPQYFHMNLTTAELTLLKPINRDLHQKFDLVIKAEQDNGHPLPAFANLHIEVLDENNQKPYFTKSTYEGFILESSPVGTTISDSRNLTSPLQITVLDNDVEETKDPQLHLFLNDYNTFFTVTQSGITRYLTLLQPVDREAQQLYTFSMIASDGVQESTPVTVNIVVIDANDNSPTFSNISYNVKIYTDMGPGEGVIKLTAVDADEGPNGQIVYEILAGDQGDFIINDRTGLIAIAPGVVLSVGRSYALTVKASDSAPPAQRRSSITTVYIEVLPPNNQSPPRFPQLMYSLEVSEAMRTGAILLNLQAFDREGDPIRYLIENGDPQQVFNLSQSSGLLALGKPLDRESTDRYILIVTASDGRPDGTSTATVNIVVTDVNDNGPVFDMFLPKNLSVQEEEANAFVGQVRATDPDAGVNGQVHYSLANFKNLFRITSNGSIYTAVKLNREVRDYYELIVEATDGAVDPRRSTLTLAIKVLDIDDNSPVFTNASYSVLVPENLPPGTVFLQIEAKDVDLGSNVTYRIRTQEALEYFALNKYTGELSLLKSLDYESFSDTDATFTFLVEAFDSKGTMPPGLATVTVRVKDMNDYSPVFSKTLYRGMVAPDAVKGTVITTVSAEDQDPPGTPASRVRYKVDVVQFPYSASIFDVEENSGRVVTRVNLNEEPSTVFKLVVIAYDDGDPVKFNTTTVEIAVLQPSVIPRFTQDEYRPPPVSESAPKGTVVTVVMAAALNQTIVYSIVSGNEEDVFAINNRTGVISVKKPLDYERVTSYELRVQADSLQVVRSNLRVPSKSNTAKVFIEVKDENDHAPVFTKKMYIGGVSEDAKMFSSVLKVKADDKDTGNYSAMQYRLIIPPIKDGKEGFVIEAYTGLIKTAMLFKNMRRSYFKFQVIATDDYGKGLSSKADVLVSVVNQLDMQVIVSNVPPTLVEQNKDQLIGILERYVQDQIPGATVVVESIGARRFGDGYSEEDYTKSDLMVYAIDPQTNRAIMRNELFKFLDGKLLDINKEFQPYLGQGGRILEIRTPDVVANVKKQAQAVGYTEGALLALAVIIILCCMPAILIVMVSYRQRQAECAKTARIQMALPAGKPASTAANNLYEELGDSTILFLLYHFQQSRGKKSVLEEGDRQRVISSFASRAIEAHKQSNINGSLNNNLPKSSSNITFLSDENPLTTQNPLYVEGVTQSPAAAGLLRKRSDALDTLSPMQLVLRDASLGGSHRAWTVPAHVTKRHAPGSLSRPVIMDPVQWQQERLKAENEGTENQHSRVDISSPLFQKISGPTLTVKEKARQFEQQALQEMKQVKSPDVKSTRSPTHSICLQERDNTLEQSPKSVFASPCLRSSPLSSPTPCEVVEPEPSAVPSVIITHHDYPEELSPPPTRKPTPPSFRIKKPVCQSFLAPQTKGEVTENIPDPPKTPPPPPPLLPPPPPSPPLLPPHPPTLPLASVPSSSSLPSTQHLSPAKHSKSPAKQPAVPPPAAVPEPPPRRELKGILKNIQNLAAIEKSVANMYSQIDKNHVLPKHISKLKPVATPELPTPEAAAEHNQQNGNLSCVVEELEKRFPSQSTAL.

The N-terminal stretch at 1–26 (MLQQFCLWKWLAVGIAVATILASSLA) is a signal peptide. Residues 27–1376 (QNDEDCKLAR…AQAVGYTEGA (1350 aa)) are Extracellular-facing. Cysteines 32 and 120 form a disulfide. 11 Cadherin domains span residues 38-147 (GPPA…SPQF), 148-265 (QQQR…GPMF), 278-395 (RPLT…KPYF), 396-509 (TKST…SPTF), 510-616 (SNIS…PPRF), 617-717 (PQLM…GPVF), 719-819 (MFLP…SPVF), 820-926 (TNAS…SPVF), 927-1035 (SKTL…IPRF), 1037-1144 (QDEY…APVF), and 1145-1259 (TKKM…PPTL). A helical membrane pass occupies residues 1377–1397 (LLALAVIIILCCMPAILIVMV). Over 1398 to 1899 (SYRQRQAECA…KRFPSQSTAL (502 aa)) the chain is Cytoplasmic. Disordered regions lie at residues 1668–1687 (SPCL…VVEP), 1700–1721 (HDYP…SFRI), and 1734–1820 (TKGE…RREL). Pro residues-rich tracts occupy residues 1706–1717 (LSPPPTRKPTPP) and 1743–1773 (PDPP…PPTL). Over residues 1774–1791 (PLASVPSSSSLPSTQHLS) the composition is skewed to low complexity. The segment covering 1804 to 1814 (AVPPPAAVPEP) has biased composition (pro residues).

In terms of tissue distribution, in the utricle, localizes to the distal region of the kinocilium and near the tips of the stereocilia.

The protein resides in the cell membrane. Calcium-dependent cell-adhesion protein. Required for inner ear neuroepithelial cell elaboration and cochlear function. Probably involved in the maintenance of normal retinal function. The polypeptide is Protocadherin-15 (Pcdh15) (Gallus gallus (Chicken)).